The chain runs to 464 residues: 3-isopropylmalate dehydratase large subunit (464 aa).

3 residues coordinate [4Fe-4S] cluster: Cys-345, Cys-405, and Cys-408.

This sequence belongs to the aconitase/IPM isomerase family. LeuC type 1 subfamily. In terms of assembly, heterodimer of LeuC and LeuD. [4Fe-4S] cluster is required as a cofactor.

The catalysed reaction is (2R,3S)-3-isopropylmalate = (2S)-2-isopropylmalate. Its pathway is amino-acid biosynthesis; L-leucine biosynthesis; L-leucine from 3-methyl-2-oxobutanoate: step 2/4. Its function is as follows. Catalyzes the isomerization between 2-isopropylmalate and 3-isopropylmalate, via the formation of 2-isopropylmaleate. In Flavobacterium johnsoniae (strain ATCC 17061 / DSM 2064 / JCM 8514 / BCRC 14874 / CCUG 350202 / NBRC 14942 / NCIMB 11054 / UW101) (Cytophaga johnsonae), this protein is 3-isopropylmalate dehydratase large subunit.